A 303-amino-acid chain; its full sequence is N-acetylmuramic acid 6-phosphate etherase (303 aa).

Positions Ile61–Lys224 constitute an SIS domain. Glu89 (proton donor) is an active-site residue. The active site involves Glu120.

The protein belongs to the GCKR-like family. MurNAc-6-P etherase subfamily. As to quaternary structure, homodimer.

It catalyses the reaction N-acetyl-D-muramate 6-phosphate + H2O = N-acetyl-D-glucosamine 6-phosphate + (R)-lactate. Its pathway is amino-sugar metabolism; 1,6-anhydro-N-acetylmuramate degradation. The protein operates within amino-sugar metabolism; N-acetylmuramate degradation. It functions in the pathway cell wall biogenesis; peptidoglycan recycling. Specifically catalyzes the cleavage of the D-lactyl ether substituent of MurNAc 6-phosphate, producing GlcNAc 6-phosphate and D-lactate. Together with AnmK, is also required for the utilization of anhydro-N-acetylmuramic acid (anhMurNAc) either imported from the medium or derived from its own cell wall murein, and thus plays a role in cell wall recycling. The protein is N-acetylmuramic acid 6-phosphate etherase (murQ) of Haemophilus influenzae (strain ATCC 51907 / DSM 11121 / KW20 / Rd).